Here is a 1025-residue protein sequence, read N- to C-terminus: DNA polymerase (1025 aa).

This sequence belongs to the DNA polymerase type-B family.

The enzyme catalyses DNA(n) + a 2'-deoxyribonucleoside 5'-triphosphate = DNA(n+1) + diphosphate. Functionally, replicates the viral genome. Host DNA polymerases cannot substitute for the viral enzyme in this process. The chain is DNA polymerase from Noctuidae (owlet moths).